A 932-amino-acid chain; its full sequence is UPF0182 protein Amet_0022 (932 aa).

7 consecutive transmembrane segments (helical) span residues valine 14–leucine 34, leucine 60–glycine 80, isoleucine 104–leucine 124, threonine 166–isoleucine 186, leucine 208–alanine 228, valine 256–valine 276, and leucine 286–leucine 306.

It belongs to the UPF0182 family.

It is found in the cell membrane. The polypeptide is UPF0182 protein Amet_0022 (Alkaliphilus metalliredigens (strain QYMF)).